Reading from the N-terminus, the 316-residue chain is Methionyl-tRNA formyltransferase (316 aa).

(6S)-5,6,7,8-tetrahydrofolate is bound at residue 108 to 111 (SLLP).

Belongs to the Fmt family.

The enzyme catalyses L-methionyl-tRNA(fMet) + (6R)-10-formyltetrahydrofolate = N-formyl-L-methionyl-tRNA(fMet) + (6S)-5,6,7,8-tetrahydrofolate + H(+). Its function is as follows. Attaches a formyl group to the free amino group of methionyl-tRNA(fMet). The formyl group appears to play a dual role in the initiator identity of N-formylmethionyl-tRNA by promoting its recognition by IF2 and preventing the misappropriation of this tRNA by the elongation apparatus. The chain is Methionyl-tRNA formyltransferase from Heliobacterium modesticaldum (strain ATCC 51547 / Ice1).